The primary structure comprises 289 residues: MMTTSYLAFPQFDPVIFSIGPLALHWYGLMYLVGFVFAMWLAVRRANKPGSGWTKDEVENLLYMGFLGVFVGGRLGYVLFYAFPSFLENPLYLFKVWDGGMSFHGGLMGVICVMLWFAHRTKRHFFQVADFIAPLIPFGLGAGRLGNFINGELWGRVTTDTPWAMLFPGSRSEDMMLAVSNPQWQTIFNQFGMLPRHPSQLYQMMLEGVALFIILNLFIRKSRPMGSVSGLFLICYGMFRIITEFFRQPDAQLGLFGGLFSMGQILSLPMVLAGILMMVWAYRRQPAQQ.

7 helical membrane-spanning segments follow: residues 23–43 (ALHW…WLAV), 61–81 (LLYM…VLFY), 99–119 (GGMS…WFAH), 125–145 (FFQV…AGRL), 199–219 (SQLY…NLFI), 226–246 (GSVS…TEFF), and 259–279 (LFSM…LMMV). Residue Arg-144 coordinates a 1,2-diacyl-sn-glycero-3-phospho-(1'-sn-glycerol).

Belongs to the Lgt family.

The protein resides in the cell inner membrane. It catalyses the reaction L-cysteinyl-[prolipoprotein] + a 1,2-diacyl-sn-glycero-3-phospho-(1'-sn-glycerol) = an S-1,2-diacyl-sn-glyceryl-L-cysteinyl-[prolipoprotein] + sn-glycerol 1-phosphate + H(+). It participates in protein modification; lipoprotein biosynthesis (diacylglyceryl transfer). Its function is as follows. Catalyzes the transfer of the diacylglyceryl group from phosphatidylglycerol to the sulfhydryl group of the N-terminal cysteine of a prolipoprotein, the first step in the formation of mature lipoproteins. This is Phosphatidylglycerol--prolipoprotein diacylglyceryl transferase from Pectobacterium atrosepticum (strain SCRI 1043 / ATCC BAA-672) (Erwinia carotovora subsp. atroseptica).